Consider the following 272-residue polypeptide: 1,4-dihydroxy-2-naphthoyl-CoA synthase (272 aa).

Substrate contacts are provided by residues R33, 72–76 (SGGDQ), Y84, 116–120 (YAIGG), T142, S148, Y245, and K260. Residue 141 to 143 (QTG) coordinates hydrogencarbonate. Over residues 253–264 (GRDAFKEKRDPD) the composition is skewed to basic and acidic residues. A disordered region spans residues 253 to 272 (GRDAFKEKRDPDFDQFPKFP).

This sequence belongs to the enoyl-CoA hydratase/isomerase family. MenB subfamily. The cofactor is hydrogencarbonate.

It carries out the reaction 2-succinylbenzoyl-CoA + H(+) = 1,4-dihydroxy-2-naphthoyl-CoA + H2O. It functions in the pathway quinol/quinone metabolism; 1,4-dihydroxy-2-naphthoate biosynthesis; 1,4-dihydroxy-2-naphthoate from chorismate: step 6/7. It participates in quinol/quinone metabolism; menaquinone biosynthesis. Functionally, converts o-succinylbenzoyl-CoA (OSB-CoA) to 1,4-dihydroxy-2-naphthoyl-CoA (DHNA-CoA). The protein is 1,4-dihydroxy-2-naphthoyl-CoA synthase of Staphylococcus haemolyticus (strain JCSC1435).